Here is a 253-residue protein sequence, read N- to C-terminus: 3-deoxy-manno-octulosonate cytidylyltransferase (253 aa).

The protein belongs to the KdsB family.

Its subcellular location is the cytoplasm. The catalysed reaction is 3-deoxy-alpha-D-manno-oct-2-ulosonate + CTP = CMP-3-deoxy-beta-D-manno-octulosonate + diphosphate. Its pathway is nucleotide-sugar biosynthesis; CMP-3-deoxy-D-manno-octulosonate biosynthesis; CMP-3-deoxy-D-manno-octulosonate from 3-deoxy-D-manno-octulosonate and CTP: step 1/1. It participates in bacterial outer membrane biogenesis; lipopolysaccharide biosynthesis. Functionally, activates KDO (a required 8-carbon sugar) for incorporation into bacterial lipopolysaccharide in Gram-negative bacteria. This chain is 3-deoxy-manno-octulosonate cytidylyltransferase, found in Edwardsiella ictaluri (strain 93-146).